Reading from the N-terminus, the 414-residue chain is MFSSESVTEGHPDKICDQISDAIVDALLTADPLSRVAAEVVVNTGLVLLTGEITSQAQVNFTRLVRDKVAEIGYTDAKNGFCAESCAVLVAFDEQSPDIAQGVNMALESRGSQEDQFDLVGAGDQGLMFGFACDETPELMPLPISLAHRLSRQLATVRKNGTLPYLRPDGKTQVTVAYEEGRPVGIHTLLISTQHTPTIGAITEEAAVQERIRADLWEAVVTPVFAELPIKPDSHTRFLTNPTGKFVIGGPQGDAGLTGRKIIVDTYGGYSRHGGGAFSGKDPTKVDRSAAYAARYVAKNIVAAGLAQKCEVQVSYAIGVARPINILVETFGTGRIPDEELLRLVQRHFDLRPAAILAQFQLRELPRQRGGRFYQNVAVYGHFGQTHLDLPWERTDKAALLREEALAKATALLA.

His-11 lines the ATP pocket. Residue Asp-13 participates in Mg(2+) binding. Glu-39 serves as a coordination point for K(+). 2 residues coordinate L-methionine: Glu-52 and Gln-95. Residues 95–105 (QSPDIAQGVNM) form a flexible loop region. Residues 169–171 (DGK), 245–246 (KF), Asp-254, 260–261 (RK), Ala-277, and Lys-281 contribute to the ATP site. Asp-254 is an L-methionine binding site. Lys-285 serves as a coordination point for L-methionine.

This sequence belongs to the AdoMet synthase family. Homotetramer; dimer of dimers. The cofactor is Mg(2+). K(+) serves as cofactor.

It localises to the cytoplasm. It catalyses the reaction L-methionine + ATP + H2O = S-adenosyl-L-methionine + phosphate + diphosphate. Its pathway is amino-acid biosynthesis; S-adenosyl-L-methionine biosynthesis; S-adenosyl-L-methionine from L-methionine: step 1/1. Catalyzes the formation of S-adenosylmethionine (AdoMet) from methionine and ATP. The overall synthetic reaction is composed of two sequential steps, AdoMet formation and the subsequent tripolyphosphate hydrolysis which occurs prior to release of AdoMet from the enzyme. The chain is S-adenosylmethionine synthase from Synechococcus sp. (strain JA-2-3B'a(2-13)) (Cyanobacteria bacterium Yellowstone B-Prime).